The sequence spans 475 residues: Sulfate adenylyltransferase subunit 1 (475 aa).

Residues 25 to 239 form the tr-type G domain; that stretch reads KSLLRFLTCG…EVLETVEIQR (215 aa). Positions 34 to 41 are G1; it reads GSVDDGKS. 34–41 provides a ligand contact to GTP; sequence GSVDDGKS. The segment at 92–96 is G2; that stretch reads GITID. The G3 stretch occupies residues 113–116; sequence DTPG. GTP contacts are provided by residues 113–117 and 168–171; these read DTPGH and NKMD. The G4 stretch occupies residues 168 to 171; the sequence is NKMD. The interval 206 to 208 is G5; sequence SAL.

The protein belongs to the TRAFAC class translation factor GTPase superfamily. Classic translation factor GTPase family. CysN/NodQ subfamily. Heterodimer composed of CysD, the smaller subunit, and CysN.

The catalysed reaction is sulfate + ATP + H(+) = adenosine 5'-phosphosulfate + diphosphate. It functions in the pathway sulfur metabolism; hydrogen sulfide biosynthesis; sulfite from sulfate: step 1/3. With CysD forms the ATP sulfurylase (ATPS) that catalyzes the adenylation of sulfate producing adenosine 5'-phosphosulfate (APS) and diphosphate, the first enzymatic step in sulfur assimilation pathway. APS synthesis involves the formation of a high-energy phosphoric-sulfuric acid anhydride bond driven by GTP hydrolysis by CysN coupled to ATP hydrolysis by CysD. The polypeptide is Sulfate adenylyltransferase subunit 1 (Shigella flexneri).